Reading from the N-terminus, the 77-residue chain is U-actitoxin-Avd12a (77 aa).

Residues 1-23 (MALFRMLFLCAVLVLLTSKEGMS) form the signal peptide. A propeptide spanning residues 24-29 (YEEPEN) is cleaved from the precursor. Positions 31–73 (EGVACTGQYAESFCLNGGTCRYIQSIGEYYCICNGDYTGHRCE) constitute an EGF-like domain. 3 cysteine pairs are disulfide-bonded: Cys35/Cys50, Cys44/Cys61, and Cys63/Cys72.

Belongs to the EGF domain peptide family.

The protein resides in the secreted. It localises to the nematocyst. Has both toxic and EGF activity. Its EGF activity consists of rounding cells (morphological change) and inducing tyrosine phosphorylation of the EGFR in A431 cells, but with a lower potency that human EGF. The chain is U-actitoxin-Avd12a from Anemonia viridis (Snakelocks anemone).